Consider the following 910-residue polypeptide: MKVGVLWLISFFTFTDGHGGFLGKNDGIKTKKELIVNKKKHLGPVEEYQLLLQVTYRDSKEKRDLRNFLKLLKPPLLWSHGLIRIIRAKATTDCNSLNGVLQCTCEDSYTWFPPSCLDPQNCYLHTAGALPSCECHLNNLSQSVNFCERTKIWGTFKINERFTNDLLNSSSAIYSKYANGIEIQLKKAYERIQGFESVQVTQFRNGSIVAGYEVVGSSSASELLSAIEHVAEKAKTALHKLFPLEDGSFRVFGKAQCNDIVFGFGSKDDEYTLPCSSGYRGNITAKCESSGWQVIRETCVLSLLEELNKNFSMIVGNATEAAVSSFVQNLSVIIRQNPSTTVGNLASVVSILSNISSLSLASHFRVSNSTMEDVISIADNILNSASVTNWTVLLREEKYASSRLLETLENISTLVPPTALPLNFSRKFIDWKGIPVNKSQLKRGYSYQIKMCPQNTSIPIRGRVLIGSDQFQRSLPETIISMASLTLGNILPVSKNGNAQVNGPVISTVIQNYSINEVFLFFSKIESNLSQPHCVFWDFSHLQWNDAGCHLVNETQDIVTCQCTHLTSFSILMSPFVPSTIFPVVKWITYVGLGISIGSLILCLIIEALFWKQIKKSQTSHTRRICMVNIALSLLIADVWFIVGATVDTTVNPSGVCTAAVFFTHFFYLSLFFWMLMLGILLAYRIILVFHHMAQHLMMAVGFCLGYGCPLIISVITIAVTQPSNTYKRKDVCWLNWSNGSKPLLAFVVPALAIVAVNFVVVLLVLTKLWRPTVGERLSRDDKATIIRVGKSLLILTPLLGLTWGFGIGTIVDSQNLAWHVIFALLNAFQGFFILCFGILLDSKLRQLLFNKLSALSSWKQTEKQNSSDLSAKPKFSKPFNPLQNKGHYAFSHTGDSSDNIMLTQFVSNE.

An N-terminal signal peptide occupies residues 1 to 19 (MKVGVLWLISFFTFTDGHG). Topologically, residues 20-583 (GFLGKNDGIK…SPFVPSTIFP (564 aa)) are extracellular. N-linked (GlcNAc...) asparagine glycosylation is found at asparagine 139, asparagine 168, asparagine 205, asparagine 282, asparagine 310, asparagine 317, asparagine 329, asparagine 354, asparagine 368, asparagine 389, asparagine 410, asparagine 423, asparagine 437, asparagine 455, asparagine 512, asparagine 528, and asparagine 553. The region spanning 148–256 (ERTKIWGTFK…GSFRVFGKAQ (109 aa)) is the SEA domain. Cystine bridges form between cysteine 257–cysteine 287 and cysteine 275–cysteine 299. Residues 437 to 579 (NKSQLKRGYS…SILMSPFVPS (143 aa)) enclose the GAIN-B domain. 2 disulfide bridges follow: cysteine 534-cysteine 561 and cysteine 549-cysteine 563. The GPS stretch occupies residues 534-579 (CVFWDFSHLQWNDAGCHLVNETQDIVTCQCTHLTSFSILMSPFVPS). The stachel stretch occupies residues 568 to 576 (SFSILMSPF). Residues 584–609 (VVKWITYVGLGISIGSLILCLIIEAL) form a helical membrane-spanning segment. At 610–621 (FWKQIKKSQTSH) the chain is on the cytoplasmic side. The helical transmembrane segment at 622 to 646 (TRRICMVNIALSLLIADVWFIVGAT) threads the bilayer. At 647-658 (VDTTVNPSGVCT) the chain is on the extracellular side. Cysteine 657 and cysteine 733 form a disulfide bridge. Residues 659–684 (AAVFFTHFFYLSLFFWMLMLGILLAY) form a helical membrane-spanning segment. Residues 685 to 696 (RIILVFHHMAQH) are Cytoplasmic-facing. Residues 697–719 (LMMAVGFCLGYGCPLIISVITIA) form a helical membrane-spanning segment. Topologically, residues 720–742 (VTQPSNTYKRKDVCWLNWSNGSK) are extracellular. N-linked (GlcNAc...) asparagine glycosylation is found at asparagine 736 and asparagine 739. A helical membrane pass occupies residues 743 to 767 (PLLAFVVPALAIVAVNFVVVLLVLT). Residues 768–784 (KLWRPTVGERLSRDDKA) are Cytoplasmic-facing. A helical transmembrane segment spans residues 785–813 (TIIRVGKSLLILTPLLGLTWGFGIGTIVD). Residues 814 to 816 (SQN) are Extracellular-facing. A helical membrane pass occupies residues 817 to 842 (LAWHVIFALLNAFQGFFILCFGILLD). The Cytoplasmic segment spans residues 843 to 910 (SKLRQLLFNK…IMLTQFVSNE (68 aa)).

Belongs to the G-protein coupled receptor 2 family. Adhesion G-protein coupled receptor (ADGR) subfamily. Heterodimer of 2 chains generated by proteolytic processing; the large extracellular N-terminal fragment and the membrane-bound C-terminal fragment predominantly remain associated and non-covalently linked. Post-translationally, autoproteolytically processed at the GPS region of the GAIN-B domain; this cleavage modulates receptor activity. In terms of processing, glycosylated. Glycosylation at Asn-389 is required for secretion or folding. In terms of tissue distribution, mainly expressed in the kidney. Up-regulated in lung adenocarcinomas and prostate cancers.

The protein resides in the cell membrane. Its subcellular location is the secreted. With respect to regulation, forms a heterodimer of 2 chains generated by proteolytic processing that remain associated through non-covalent interactions mediated by the GAIN-B domain. In the inactivated receptor, the Stachel sequence (also named stalk) is embedded in the GAIN-B domain, where it adopts a beta-strand conformation. On activation, the Stachel moves into the 7 transmembrane region and adopts a twisted hook-shaped configuration that forms contacts within the receptor, leading to coupling of a G-alpha protein, which activates signaling. The cleaved GAIN-B and N-terminal domains can then dissociate from the rest of the receptor. Functionally, adhesion G-protein coupled receptor (aGPCR) for N-docosahexaenoylethanolamine (synaptamide), an omega-3 fatty acid lipid highly enriched in the brain. Ligand binding causes a conformation change that triggers signaling via guanine nucleotide-binding proteins (G proteins) and modulates the activity of downstream effectors, such as adenylate cyclase. ADGRF1 is coupled to G(s) G proteins and mediates activation of adenylate cyclase activity. Also able to couple to G(q), G(i) and G(12)/G(13) G proteins; additional evidence is however required to confirm this result in vivo. Involved in the development of neurons and cognitive function. In liver, involved in fat accumulation. In Homo sapiens (Human), this protein is Adhesion G-protein coupled receptor F1.